A 378-amino-acid polypeptide reads, in one-letter code: Protein FAM185A (378 aa).

In Mus musculus (Mouse), this protein is Protein FAM185A (Fam185a).